Consider the following 475-residue polypeptide: Ribulose bisphosphate carboxylase large chain (475 aa).

A propeptide spanning residues 1–2 is cleaved from the precursor; sequence MA. Position 3 is an N-acetylproline (P3). K14 carries the N6,N6,N6-trimethyllysine modification. Substrate is bound by residues N123 and T173. The active-site Proton acceptor is the K175. Residue K177 participates in substrate binding. Mg(2+) contacts are provided by K201, D203, and E204. K201 carries the N6-carboxylysine modification. The Proton acceptor role is filled by H294. Substrate contacts are provided by R295, H327, and S379.

This sequence belongs to the RuBisCO large chain family. Type I subfamily. Heterohexadecamer of 8 large chains and 8 small chains; disulfide-linked. The disulfide link is formed within the large subunit homodimers. It depends on Mg(2+) as a cofactor. Post-translationally, the disulfide bond which can form in the large chain dimeric partners within the hexadecamer appears to be associated with oxidative stress and protein turnover.

The protein localises to the plastid. The protein resides in the chloroplast. The catalysed reaction is 2 (2R)-3-phosphoglycerate + 2 H(+) = D-ribulose 1,5-bisphosphate + CO2 + H2O. The enzyme catalyses D-ribulose 1,5-bisphosphate + O2 = 2-phosphoglycolate + (2R)-3-phosphoglycerate + 2 H(+). In terms of biological role, ruBisCO catalyzes two reactions: the carboxylation of D-ribulose 1,5-bisphosphate, the primary event in carbon dioxide fixation, as well as the oxidative fragmentation of the pentose substrate in the photorespiration process. Both reactions occur simultaneously and in competition at the same active site. The sequence is that of Ribulose bisphosphate carboxylase large chain from Bryopsis maxima (Green alga).